A 240-amino-acid polypeptide reads, in one-letter code: Acetoacetyl-CoA reductase (240 aa).

NADP(+) is bound by residues 18-20 and 82-86; these read RGI and NAGIT. Substrate-binding positions include Ser-134 and 141-144; that span reads NVGQ. The Proton acceptor role is filled by Tyr-147. An NADP(+)-binding site is contributed by 177 to 180; that stretch reads PGFI. 178 to 179 provides a ligand contact to substrate; sequence GF.

Belongs to the short-chain dehydrogenases/reductases (SDR) family.

It carries out the reaction a (3R)-3-hydroxyacyl-CoA + NADP(+) = a 3-oxoacyl-CoA + NADPH + H(+). It participates in biopolymer metabolism; poly-(R)-3-hydroxybutanoate biosynthesis. Functionally, catalyzes the reduction of acetoacetyl-CoA to (R)-3-hydroxybutyryl-CoA. When expressed in E.coli with Synechocystis PhaA, PhaC and PhaE confers the ability to synthesize up to 12% (w/w) poly(3-hydroxybutyrate) (PHB) depending on the carbon source. This is Acetoacetyl-CoA reductase from Synechocystis sp. (strain ATCC 27184 / PCC 6803 / Kazusa).